A 302-amino-acid polypeptide reads, in one-letter code: Large ribosomal subunit protein uL18 (302 aa).

This sequence belongs to the universal ribosomal protein uL18 family. In terms of assembly, component of the large ribosomal subunit (LSU).

The protein localises to the cytoplasm. It localises to the nucleus. In terms of biological role, component of the ribosome, a large ribonucleoprotein complex responsible for the synthesis of proteins in the cell. The small ribosomal subunit (SSU) binds messenger RNAs (mRNAs) and translates the encoded message by selecting cognate aminoacyl-transfer RNA (tRNA) molecules. The large subunit (LSU) contains the ribosomal catalytic site termed the peptidyl transferase center (PTC), which catalyzes the formation of peptide bonds, thereby polymerizing the amino acids delivered by tRNAs into a polypeptide chain. The nascent polypeptides leave the ribosome through a tunnel in the LSU and interact with protein factors that function in enzymatic processing, targeting, and the membrane insertion of nascent chains at the exit of the ribosomal tunnel. The chain is Large ribosomal subunit protein uL18 (RPL5) from Cucumis sativus (Cucumber).